We begin with the raw amino-acid sequence, 352 residues long: Putative formin-like protein 15b (352 aa).

The FH2 domain occupies 1-350 (MTLFNFIKLF…KDAKEAEMEK (350 aa)).

This sequence belongs to the formin-like family. Class-II subfamily.

This is Putative formin-like protein 15b (FH15B) from Arabidopsis thaliana (Mouse-ear cress).